Consider the following 153-residue polypeptide: Aspartate carbamoyltransferase regulatory chain (153 aa).

Zn(2+) contacts are provided by C109, C114, C138, and C141.

It belongs to the PyrI family. In terms of assembly, contains catalytic and regulatory chains. Requires Zn(2+) as cofactor.

Involved in allosteric regulation of aspartate carbamoyltransferase. The polypeptide is Aspartate carbamoyltransferase regulatory chain (Nitrosopumilus maritimus (strain SCM1)).